The sequence spans 175 residues: Translation initiation factor IF-3 (175 aa).

The protein belongs to the IF-3 family. As to quaternary structure, monomer.

The protein localises to the cytoplasm. IF-3 binds to the 30S ribosomal subunit and shifts the equilibrium between 70S ribosomes and their 50S and 30S subunits in favor of the free subunits, thus enhancing the availability of 30S subunits on which protein synthesis initiation begins. The sequence is that of Translation initiation factor IF-3 from Staphylococcus aureus (strain MRSA252).